We begin with the raw amino-acid sequence, 274 residues long: HMP-PP phosphatase (274 aa).

Catalysis depends on D8, which acts as the Nucleophile. Mg(2+) contacts are provided by D8, D10, and D213.

This sequence belongs to the HAD-like hydrolase superfamily. Cof family. The cofactor is Mg(2+).

It carries out the reaction 4-amino-2-methyl-5-(diphosphooxymethyl)pyrimidine + H2O = 4-amino-2-methyl-5-(phosphooxymethyl)pyrimidine + phosphate + H(+). In terms of biological role, catalyzes the hydrolysis of 4-amino-2-methyl-5-hydroxymethylpyrimidine pyrophosphate (HMP-PP) to 4-amino-2-methyl-5-hydroxymethylpyrimidine phosphate (HMP-P). The chain is HMP-PP phosphatase from Serratia proteamaculans (strain 568).